Reading from the N-terminus, the 433-residue chain is Dihydroorotase (433 aa).

Positions 63 and 65 each coordinate Zn(2+). Substrate is bound by residues 65-67 (HLR) and Asn-97. 3 residues coordinate Zn(2+): Asp-155, His-182, and His-235. Asn-283 contributes to the substrate binding site. Residue Asp-310 participates in Zn(2+) binding. Asp-310 is an active-site residue. His-314 serves as a coordination point for substrate.

The protein belongs to the metallo-dependent hydrolases superfamily. DHOase family. Class I DHOase subfamily. The cofactor is Zn(2+).

The enzyme catalyses (S)-dihydroorotate + H2O = N-carbamoyl-L-aspartate + H(+). It participates in pyrimidine metabolism; UMP biosynthesis via de novo pathway; (S)-dihydroorotate from bicarbonate: step 3/3. Functionally, catalyzes the reversible cyclization of carbamoyl aspartate to dihydroorotate. The sequence is that of Dihydroorotase from Anaeromyxobacter sp. (strain K).